The primary structure comprises 357 residues: S-adenosylmethionine:tRNA ribosyltransferase-isomerase (357 aa).

It belongs to the QueA family. Monomer.

Its subcellular location is the cytoplasm. It carries out the reaction 7-aminomethyl-7-carbaguanosine(34) in tRNA + S-adenosyl-L-methionine = epoxyqueuosine(34) in tRNA + adenine + L-methionine + 2 H(+). The protein operates within tRNA modification; tRNA-queuosine biosynthesis. In terms of biological role, transfers and isomerizes the ribose moiety from AdoMet to the 7-aminomethyl group of 7-deazaguanine (preQ1-tRNA) to give epoxyqueuosine (oQ-tRNA). This is S-adenosylmethionine:tRNA ribosyltransferase-isomerase from Hamiltonella defensa subsp. Acyrthosiphon pisum (strain 5AT).